We begin with the raw amino-acid sequence, 209 residues long: Large ribosomal subunit protein uL3c (209 aa).

The interval 132 to 154 (PMSHGSKNHRLPGSIGAGSTPGR) is disordered.

The protein belongs to the universal ribosomal protein uL3 family. Part of the 50S ribosomal subunit.

It localises to the plastid. The protein localises to the cyanelle. One of the primary rRNA binding proteins, it binds directly near the 3'-end of the 23S rRNA, where it nucleates assembly of the 50S subunit. This Cyanophora paradoxa protein is Large ribosomal subunit protein uL3c (rpl3).